Reading from the N-terminus, the 220-residue chain is CASP-like protein 1E1 (220 aa).

The Cytoplasmic segment spans residues 1–57 (METPTPRVKPGFNGVGVGMGSSVNGSSRRAGYYMGPAGAVAVAGGGRAAAAAPVDGC). The helical transmembrane segment at 58–78 (SVALRVFVLAATLVSAVVMGV) threads the bilayer. Residues 79–108 (DRQTSTIRITVTDALPPLEVPLTANWSYSS) are Extracellular-facing. Asparagine 103 carries an N-linked (GlcNAc...) asparagine glycan. Residues 109–129 (AFVYFVVANAMVCLFSAAALA) form a helical membrane-spanning segment. Topologically, residues 130–144 (ACRSRAAMVPVMVGD) are cytoplasmic. Residues 145–165 (LLALALLYSAVGAAAEFGILG) form a helical membrane-spanning segment. Over 166–187 (ERGNSHVRWPKVCNVYGRFCER) the chain is Extracellular. A helical transmembrane segment spans residues 188–208 (AMAAVIVSLIAAFANLVLLML). At 209-220 (NILTIHKSSSYY) the chain is on the cytoplasmic side.

Belongs to the Casparian strip membrane proteins (CASP) family. In terms of assembly, homodimer and heterodimers.

Its subcellular location is the cell membrane. In Zea mays (Maize), this protein is CASP-like protein 1E1.